Reading from the N-terminus, the 701-residue chain is Polyribonucleotide nucleotidyltransferase (701 aa).

Residues aspartate 487 and aspartate 493 each contribute to the Mg(2+) site. The region spanning 554-613 is the KH domain; it reads PTMLQMKIDSDKIRDVIGKGGATIRAICEETKASIDIEDDGSVKIYGETKEAAEAAKQRV. Residues 623 to 691 enclose the S1 motif domain; it reads GKIYVGKVER…NRGRIKLSIK (69 aa).

This sequence belongs to the polyribonucleotide nucleotidyltransferase family. In terms of assembly, component of the RNA degradosome, which is a multiprotein complex involved in RNA processing and mRNA degradation. The cofactor is Mg(2+).

It localises to the cytoplasm. It carries out the reaction RNA(n+1) + phosphate = RNA(n) + a ribonucleoside 5'-diphosphate. Functionally, involved in mRNA degradation. Catalyzes the phosphorolysis of single-stranded polyribonucleotides processively in the 3'- to 5'-direction. The polypeptide is Polyribonucleotide nucleotidyltransferase (Pseudomonas paraeruginosa (strain DSM 24068 / PA7) (Pseudomonas aeruginosa (strain PA7))).